The following is a 122-amino-acid chain: Ribosome-binding factor A (122 aa).

The protein belongs to the RbfA family. In terms of assembly, monomer. Binds 30S ribosomal subunits, but not 50S ribosomal subunits or 70S ribosomes.

The protein localises to the cytoplasm. Its function is as follows. One of several proteins that assist in the late maturation steps of the functional core of the 30S ribosomal subunit. Associates with free 30S ribosomal subunits (but not with 30S subunits that are part of 70S ribosomes or polysomes). Required for efficient processing of 16S rRNA. May interact with the 5'-terminal helix region of 16S rRNA. The chain is Ribosome-binding factor A from Geotalea uraniireducens (strain Rf4) (Geobacter uraniireducens).